We begin with the raw amino-acid sequence, 415 residues long: MKLSSCVLIFLLCNTFSSISAFRLSRSQPTERISGSAGDVLEDDPVGRLKVFVYELPSKYNKKILQKDPRCLNHMFAAEIYMQRFLLSSPVRTLNPEEADWFYVPVYTTCDLTPNGLPLPFKSPRMMRSAIQLIASNWPYWNRTEGADHFFVVPHDFGACFHYQEEKAIGRGILPLLQRATLVQTFGQRNHVCLKEGSITVPPYAPPQKMQSHLIPEKTPRSIFVYFRGLFYDVGNDPEGGYYARGARAAVWENFKDNPLFDISTEHPTTYYEDMQRAIFCLCPLGWAPWSPRLVEAVIFGCIPVIIADDIVLPFADAIPWEDIGVFVDEKDVPYLDTILTSIPPEVILRKQRLLANPSMKQAMLFPQPAQPGDAFHQVLNGLARKLPHERSVYLRPGEKLLNWTAGPVADLKPW.

Methionine 1 is a topological domain (cytoplasmic). Residues lysine 2–phenylalanine 22 form a helical; Signal-anchor for type II membrane protein membrane-spanning segment. Over arginine 23–tryptophan 415 the chain is Lumenal. Residues asparagine 142 and asparagine 403 are each glycosylated (N-linked (GlcNAc...) asparagine).

Belongs to the glycosyltransferase 47 family. In terms of tissue distribution, present in the xylem and phloem, and, to a lower extent, in interfascicular cells. Expressed in the root tip, shoot apical meristem (SAM), xylem cells of roots and stems, and in the vasculature of roots, cotyledons and leaves.

It is found in the golgi apparatus membrane. Functionally, involved in the synthesis of the hemicellulose glucuronoxylan, a major component of secondary cell walls. Probably involved in the elongation of glucuronoxylan xylosyl backbone. The protein is Probable beta-1,4-xylosyltransferase IRX10L (IRX10L) of Arabidopsis thaliana (Mouse-ear cress).